The chain runs to 119 residues: Ribonuclease P protein component (119 aa).

The protein belongs to the RnpA family. In terms of assembly, consists of a catalytic RNA component (M1 or rnpB) and a protein subunit.

The catalysed reaction is Endonucleolytic cleavage of RNA, removing 5'-extranucleotides from tRNA precursor.. In terms of biological role, RNaseP catalyzes the removal of the 5'-leader sequence from pre-tRNA to produce the mature 5'-terminus. It can also cleave other RNA substrates such as 4.5S RNA. The protein component plays an auxiliary but essential role in vivo by binding to the 5'-leader sequence and broadening the substrate specificity of the ribozyme. This is Ribonuclease P protein component from Aeromonas salmonicida (strain A449).